Here is a 306-residue protein sequence, read N- to C-terminus: Lipoyl synthase (306 aa).

Positions 52, 57, 63, 78, 82, 85, and 289 each coordinate [4Fe-4S] cluster. The Radical SAM core domain maps to 64–278 (WNRKTATYML…KETAYKIGFK (215 aa)).

Belongs to the radical SAM superfamily. Lipoyl synthase family. [4Fe-4S] cluster is required as a cofactor.

The protein resides in the cytoplasm. It carries out the reaction [[Fe-S] cluster scaffold protein carrying a second [4Fe-4S](2+) cluster] + N(6)-octanoyl-L-lysyl-[protein] + 2 oxidized [2Fe-2S]-[ferredoxin] + 2 S-adenosyl-L-methionine + 4 H(+) = [[Fe-S] cluster scaffold protein] + N(6)-[(R)-dihydrolipoyl]-L-lysyl-[protein] + 4 Fe(3+) + 2 hydrogen sulfide + 2 5'-deoxyadenosine + 2 L-methionine + 2 reduced [2Fe-2S]-[ferredoxin]. It participates in protein modification; protein lipoylation via endogenous pathway; protein N(6)-(lipoyl)lysine from octanoyl-[acyl-carrier-protein]: step 2/2. Functionally, catalyzes the radical-mediated insertion of two sulfur atoms into the C-6 and C-8 positions of the octanoyl moiety bound to the lipoyl domains of lipoate-dependent enzymes, thereby converting the octanoylated domains into lipoylated derivatives. The chain is Lipoyl synthase from Leptospira biflexa serovar Patoc (strain Patoc 1 / Ames).